The chain runs to 166 residues: Phospholipase A2 inhibitor clone 10 (166 aa).

Positions 1 to 19 are cleaved as a signal peptide; the sequence is MRLILLSSLLLLGIFLANG. Positions 46 to 161 constitute a C-type lectin domain; that stretch reads LKYSFLTVHR…CDDNLLVVCE (116 aa). 2 cysteine pairs are disulfide-bonded: Cys-83/Cys-160 and Cys-138/Cys-152. Asn-122 carries N-linked (GlcNAc...) asparagine glycosylation.

It belongs to the alpha-type phospholipase A2 inhibitor family. As to quaternary structure, homotrimer; non-covalently linked. In terms of tissue distribution, expressed by the liver.

The protein resides in the secreted. In terms of biological role, this phospholipase A2 inhibitor binds directly phospholipase A2 in the presence or absence of calcium. The polypeptide is Phospholipase A2 inhibitor clone 10 (Bothrops moojeni (Lance-headed viper)).